The chain runs to 305 residues: Homeobox protein NANOGP8 (305 aa).

The segment at 1–96 (MSVDPACPQS…KEDKVPVKKQ (96 aa)) is disordered. The segment covering 65–82 (SPDSSTSPKGKQPTSAEN) has biased composition (polar residues). Positions 95 to 154 (KQKTRTVFSSTQLCVLNDRFQRQKYLSLQQMQELSNILNLSYKQVKTWFQNQRMKSKRWQ) form a DNA-binding region, homeobox. A run of 8 repeats spans residues 196–200 (WSNQT), 201–205 (WNNST), 206–210 (WSNQT), 216–220 (WSNHS), 221–225 (WNTQT), 226–230 (WCTQS), 231–235 (WNNQA), and 236–240 (WNSPF). Positions 196–240 (WSNQTWNNSTWSNQTQNIQSWSNHSWNTQTWCTQSWNNQAWNSPF) are 8 X repeats starting with a Trp in each unit. Residues 196-240 (WSNQTWNNSTWSNQTQNIQSWSNHSWNTQTWCTQSWNNQAWNSPF) form a sufficient for transactivation activity region. The segment at 241 to 305 (YNCGEESLQS…YSMNMQPEDV (65 aa)) is sufficient for strong transactivation activity.

Belongs to the Nanog homeobox family.

It localises to the nucleus. May act as a transcription regulator. When overexpressed, promotes entry of cells into S phase and cell proliferation. The protein is Homeobox protein NANOGP8 (NANOGP8) of Homo sapiens (Human).